A 379-amino-acid polypeptide reads, in one-letter code: Chaperone protein DnaJ (379 aa).

Positions 5 to 70 (DYYEILGVPK…QKRAAYDQYG (66 aa)) constitute a J domain. The CR-type zinc finger occupies 134–212 (GVTKEIRIPT…CHGHGRIEKT (79 aa)). Residues cysteine 147, cysteine 150, cysteine 164, cysteine 167, cysteine 186, cysteine 189, cysteine 200, and cysteine 203 each coordinate Zn(2+). CXXCXGXG motif repeat units lie at residues 147-154 (CEVCHGSG), 164-171 (CPTCHGAG), 186-193 (CPHCQGRG), and 200-207 (CNSCHGHG).

Belongs to the DnaJ family. In terms of assembly, homodimer. The cofactor is Zn(2+).

It localises to the cytoplasm. Functionally, participates actively in the response to hyperosmotic and heat shock by preventing the aggregation of stress-denatured proteins and by disaggregating proteins, also in an autonomous, DnaK-independent fashion. Unfolded proteins bind initially to DnaJ; upon interaction with the DnaJ-bound protein, DnaK hydrolyzes its bound ATP, resulting in the formation of a stable complex. GrpE releases ADP from DnaK; ATP binding to DnaK triggers the release of the substrate protein, thus completing the reaction cycle. Several rounds of ATP-dependent interactions between DnaJ, DnaK and GrpE are required for fully efficient folding. Also involved, together with DnaK and GrpE, in the DNA replication of plasmids through activation of initiation proteins. The sequence is that of Chaperone protein DnaJ from Cronobacter sakazakii (strain ATCC BAA-894) (Enterobacter sakazakii).